Reading from the N-terminus, the 214-residue chain is MNQSLLASFGSSEERVIAALDTFKQGNGVLVLDDENRENEGDLIFPAETITTEQMAKLIRYGSGIVCLCITDELCQKLELPPMVAANTSVNKTAFTVTIEAAEGVSTGVSAADRVTTVKVAVADNAKPSDLHHPGHVFPLRAAENGVLARPGHTEAAVDLARLCGYKPAGVICEITNDDGTMARTPELVAFAQKFGYAVVTIEDLIAYRTKYNK.

Residues 37-38 (RE), D42, 150-154 (RPGHT), and E174 contribute to the D-ribulose 5-phosphate site. E38 is a binding site for Mg(2+). Residue H153 participates in Mg(2+) binding.

Belongs to the DHBP synthase family. Homodimer. It depends on Mg(2+) as a cofactor. Requires Mn(2+) as cofactor.

The enzyme catalyses D-ribulose 5-phosphate = (2S)-2-hydroxy-3-oxobutyl phosphate + formate + H(+). It participates in cofactor biosynthesis; riboflavin biosynthesis; 2-hydroxy-3-oxobutyl phosphate from D-ribulose 5-phosphate: step 1/1. Its function is as follows. Catalyzes the conversion of D-ribulose 5-phosphate to formate and 3,4-dihydroxy-2-butanone 4-phosphate. This chain is 3,4-dihydroxy-2-butanone 4-phosphate synthase, found in Mannheimia succiniciproducens (strain KCTC 0769BP / MBEL55E).